The sequence spans 505 residues: Glycerol kinase 2 (505 aa).

Threonine 17 provides a ligand contact to ADP. ATP-binding residues include threonine 17, threonine 18, and serine 19. Threonine 17 is a binding site for sn-glycerol 3-phosphate. Arginine 21 lines the ADP pocket. Sn-glycerol 3-phosphate contacts are provided by arginine 87, glutamate 88, tyrosine 139, and aspartate 249. Glycerol-binding residues include arginine 87, glutamate 88, tyrosine 139, aspartate 249, and glutamine 250. 2 residues coordinate ADP: threonine 271 and glycine 314. 4 residues coordinate ATP: threonine 271, glycine 314, glutamine 318, and glycine 415. Residues glycine 415 and asparagine 419 each coordinate ADP.

This sequence belongs to the FGGY kinase family.

The enzyme catalyses glycerol + ATP = sn-glycerol 3-phosphate + ADP + H(+). It participates in polyol metabolism; glycerol degradation via glycerol kinase pathway; sn-glycerol 3-phosphate from glycerol: step 1/1. Its activity is regulated as follows. Inhibited by fructose 1,6-bisphosphate (FBP). In terms of biological role, key enzyme in the regulation of glycerol uptake and metabolism. Catalyzes the phosphorylation of glycerol to yield sn-glycerol 3-phosphate. The chain is Glycerol kinase 2 from Pseudomonas aeruginosa (strain ATCC 15692 / DSM 22644 / CIP 104116 / JCM 14847 / LMG 12228 / 1C / PRS 101 / PAO1).